The primary structure comprises 506 residues: Maturase K (506 aa).

It belongs to the intron maturase 2 family. MatK subfamily.

It localises to the plastid. Its subcellular location is the chloroplast. Its function is as follows. Usually encoded in the trnK tRNA gene intron. Probably assists in splicing its own and other chloroplast group II introns. The polypeptide is Maturase K (Empetrum nigrum (Black crowberry)).